The chain runs to 149 residues: uncharacterized protein (149 aa).

This is an uncharacterized protein from Schizosaccharomyces pombe (strain 972 / ATCC 24843) (Fission yeast).